The chain runs to 104 residues: Probable quinol monooxygenase YgiN (104 aa).

An ABM domain is found at 2 to 100 (LTVIAEIRTR…DVLEMNIRIL (99 aa)).

In terms of assembly, homodimer.

The enzyme catalyses menadiol + 2 O2 = menadione + 2 superoxide + 2 H(+). Can oxidize menadiol to menadione. This chain is Probable quinol monooxygenase YgiN (ygiN), found in Escherichia coli O157:H7.